Consider the following 146-residue polypeptide: Small ribosomal subunit protein uS13 (146 aa).

Residues 119–146 (ARGKKVRGQRTRSTGRKGRTVGVVRRKR) are disordered.

The protein belongs to the universal ribosomal protein uS13 family. Part of the 30S ribosomal subunit. Forms a loose heterodimer with protein S19. Forms two bridges to the 50S subunit in the 70S ribosome.

Functionally, located at the top of the head of the 30S subunit, it contacts several helices of the 16S rRNA. In the 70S ribosome it contacts the 23S rRNA (bridge B1a) and protein L5 of the 50S subunit (bridge B1b), connecting the 2 subunits; these bridges are implicated in subunit movement. This Archaeoglobus fulgidus (strain ATCC 49558 / DSM 4304 / JCM 9628 / NBRC 100126 / VC-16) protein is Small ribosomal subunit protein uS13.